The sequence spans 219 residues: tRNA (guanine-N(7)-)-methyltransferase (219 aa).

4 residues coordinate S-adenosyl-L-methionine: glutamate 43, aspartate 68, glutamate 101, and asparagine 124. Positions 128 and 160 each coordinate substrate.

It belongs to the class I-like SAM-binding methyltransferase superfamily. TrmB family.

It catalyses the reaction guanosine(46) in tRNA + S-adenosyl-L-methionine = N(7)-methylguanosine(46) in tRNA + S-adenosyl-L-homocysteine. It functions in the pathway tRNA modification; N(7)-methylguanine-tRNA biosynthesis. Catalyzes the formation of N(7)-methylguanine at position 46 (m7G46) in tRNA. This Clostridium botulinum (strain Eklund 17B / Type B) protein is tRNA (guanine-N(7)-)-methyltransferase.